The following is a 295-amino-acid chain: Acetyl-coenzyme A carboxylase carboxyl transferase subunit beta (295 aa).

Residues M1–K20 form a disordered region. Positions L28–A295 constitute a CoA carboxyltransferase N-terminal domain. Zn(2+)-binding residues include C32, C35, C51, and C54. The segment at C32–C54 adopts a C4-type zinc-finger fold.

Belongs to the AccD/PCCB family. Acetyl-CoA carboxylase is a heterohexamer composed of biotin carboxyl carrier protein (AccB), biotin carboxylase (AccC) and two subunits each of ACCase subunit alpha (AccA) and ACCase subunit beta (AccD). Zn(2+) serves as cofactor.

It is found in the cytoplasm. It carries out the reaction N(6)-carboxybiotinyl-L-lysyl-[protein] + acetyl-CoA = N(6)-biotinyl-L-lysyl-[protein] + malonyl-CoA. It functions in the pathway lipid metabolism; malonyl-CoA biosynthesis; malonyl-CoA from acetyl-CoA: step 1/1. Its function is as follows. Component of the acetyl coenzyme A carboxylase (ACC) complex. Biotin carboxylase (BC) catalyzes the carboxylation of biotin on its carrier protein (BCCP) and then the CO(2) group is transferred by the transcarboxylase to acetyl-CoA to form malonyl-CoA. The polypeptide is Acetyl-coenzyme A carboxylase carboxyl transferase subunit beta (Xanthomonas euvesicatoria pv. vesicatoria (strain 85-10) (Xanthomonas campestris pv. vesicatoria)).